The sequence spans 127 residues: uncharacterized protein (127 aa).

Residues 91-113 (IYLIVSIAVSILAIIAFFIFLML) form a helical membrane-spanning segment.

It is found in the membrane. This is an uncharacterized protein from Bacillus subtilis (strain 168).